A 216-amino-acid polypeptide reads, in one-letter code: RNA pyrophosphohydrolase (216 aa).

Residues 6–149 (GFRPNVGIIL…KRDVYQLALT (144 aa)) form the Nudix hydrolase domain. Positions 38–59 (GGIKYGETPMQAMYRELHEETG) match the Nudix box motif. The tract at residues 159–188 (AQRTDKSRGPRAPRYPRVANGHAASEAPAA) is disordered.

It belongs to the Nudix hydrolase family. RppH subfamily. A divalent metal cation serves as cofactor.

Functionally, accelerates the degradation of transcripts by removing pyrophosphate from the 5'-end of triphosphorylated RNA, leading to a more labile monophosphorylated state that can stimulate subsequent ribonuclease cleavage. The chain is RNA pyrophosphohydrolase from Burkholderia mallei (strain NCTC 10247).